Consider the following 368-residue polypeptide: Protein RecA (368 aa).

72-79 (GNESSGKT) provides a ligand contact to ATP.

This sequence belongs to the RecA family.

It is found in the cytoplasm. Can catalyze the hydrolysis of ATP in the presence of single-stranded DNA, the ATP-dependent uptake of single-stranded DNA by duplex DNA, and the ATP-dependent hybridization of homologous single-stranded DNAs. It interacts with LexA causing its activation and leading to its autocatalytic cleavage. This is Protein RecA from Petrotoga mobilis (strain DSM 10674 / SJ95).